We begin with the raw amino-acid sequence, 252 residues long: Large ribosomal subunit protein uL4 (252 aa).

Belongs to the universal ribosomal protein uL4 family. As to quaternary structure, part of the 50S ribosomal subunit.

One of the primary rRNA binding proteins, this protein initially binds near the 5'-end of the 23S rRNA. It is important during the early stages of 50S assembly. It makes multiple contacts with different domains of the 23S rRNA in the assembled 50S subunit and ribosome. In terms of biological role, forms part of the polypeptide exit tunnel. This chain is Large ribosomal subunit protein uL4, found in Methanococcus vannielii (strain ATCC 35089 / DSM 1224 / JCM 13029 / OCM 148 / SB).